A 483-amino-acid chain; its full sequence is tRNA-2-methylthio-N(6)-dimethylallyladenosine synthase (483 aa).

An MTTase N-terminal domain is found at 31-148; that stretch reads KKLYIETQGC…LPQMLDQHHA (118 aa). The [4Fe-4S] cluster site is built by Cys-40, Cys-77, Cys-111, Cys-192, Cys-196, and Cys-199. One can recognise a Radical SAM core domain in the interval 178-410; that stretch reads RVEGFKAFVS…QQVIKQSSIE (233 aa). The region spanning 413 to 477 is the TRAM domain; sequence DAMLGKIERV…LNLVYGELLN (65 aa).

It belongs to the methylthiotransferase family. MiaB subfamily. Monomer. [4Fe-4S] cluster is required as a cofactor.

It localises to the cytoplasm. The catalysed reaction is N(6)-dimethylallyladenosine(37) in tRNA + (sulfur carrier)-SH + AH2 + 2 S-adenosyl-L-methionine = 2-methylsulfanyl-N(6)-dimethylallyladenosine(37) in tRNA + (sulfur carrier)-H + 5'-deoxyadenosine + L-methionine + A + S-adenosyl-L-homocysteine + 2 H(+). Functionally, catalyzes the methylthiolation of N6-(dimethylallyl)adenosine (i(6)A), leading to the formation of 2-methylthio-N6-(dimethylallyl)adenosine (ms(2)i(6)A) at position 37 in tRNAs that read codons beginning with uridine. The chain is tRNA-2-methylthio-N(6)-dimethylallyladenosine synthase from Acinetobacter baumannii (strain ACICU).